The chain runs to 78 residues: ATP synthase subunit c (78 aa).

2 consecutive transmembrane segments (helical) span residues 16–36 (LATL…ASFL) and 57–77 (MALA…ILFV).

This sequence belongs to the ATPase C chain family. In terms of assembly, F-type ATPases have 2 components, F(1) - the catalytic core - and F(0) - the membrane proton channel. F(1) has five subunits: alpha(3), beta(3), gamma(1), delta(1), epsilon(1). F(0) has three main subunits: a(1), b(2) and c(10-14). The alpha and beta chains form an alternating ring which encloses part of the gamma chain. F(1) is attached to F(0) by a central stalk formed by the gamma and epsilon chains, while a peripheral stalk is formed by the delta and b chains.

It is found in the cell inner membrane. In terms of biological role, f(1)F(0) ATP synthase produces ATP from ADP in the presence of a proton or sodium gradient. F-type ATPases consist of two structural domains, F(1) containing the extramembraneous catalytic core and F(0) containing the membrane proton channel, linked together by a central stalk and a peripheral stalk. During catalysis, ATP synthesis in the catalytic domain of F(1) is coupled via a rotary mechanism of the central stalk subunits to proton translocation. Key component of the F(0) channel; it plays a direct role in translocation across the membrane. A homomeric c-ring of between 10-14 subunits forms the central stalk rotor element with the F(1) delta and epsilon subunits. In Hyphomonas neptunium (strain ATCC 15444), this protein is ATP synthase subunit c.